We begin with the raw amino-acid sequence, 416 residues long: Major royal jelly protein 8 (416 aa).

The signal sequence occupies residues 1–16; that stretch reads MIRWLLLMYLGITCQG. N-linked (GlcNAc...) asparagine glycans are attached at residues Asn24, Asn58, Asn93, Asn115, Asn158, Asn175, Asn196, and Asn215.

It belongs to the major royal jelly protein family. As to expression, expressed at very low levels in the hypopharyngeal glands of worker honey bees (at protein level). Secreted into bee venom in the sting apparatus (at protein level). Expressed in the spermatheca of adult queen bees (at protein level); expression levels are higher in mated queens than in virgin queens. Along with Mrjp9 expressed at very low levels in the head of worker bees compared to other major royal jelly proteins.

It localises to the secreted. In terms of biological role, component of bee sting venom. Component of royal jelly, a substance produced in the hypopharyngeal gland containing proteins, free amino acids, fatty acids, sugars and other nutrients, which is fed to developing larvae by worker nurse bees; may be present only at trace levels. All larvae are fed some royal jelly (also known as worker jelly) early in their development but it forms the principal source of nutrition for larvae destined to become queen bees. Produced in the spermatheca of adult queen bees, along with other major royal jelly proteins, where it may act as a nutrient supply for sperm stored by mated queens, or be involved in energy metabolism. The polypeptide is Major royal jelly protein 8 (Apis mellifera (Honeybee)).